The following is a 244-amino-acid chain: NAD(P)H-quinone oxidoreductase subunit K (244 aa).

Residues Cys60, Cys61, Cys125, and Cys156 each coordinate [4Fe-4S] cluster. The segment at 213–244 (KSEKSIESSKLNPVEESSENIYETNSIDEVIK) is disordered. Residues 231–244 (ENIYETNSIDEVIK) show a composition bias toward polar residues.

It belongs to the complex I 20 kDa subunit family. In terms of assembly, NDH-1 can be composed of about 15 different subunits; different subcomplexes with different compositions have been identified which probably have different functions. The cofactor is [4Fe-4S] cluster.

The protein resides in the cellular thylakoid membrane. It catalyses the reaction a plastoquinone + NADH + (n+1) H(+)(in) = a plastoquinol + NAD(+) + n H(+)(out). It carries out the reaction a plastoquinone + NADPH + (n+1) H(+)(in) = a plastoquinol + NADP(+) + n H(+)(out). NDH-1 shuttles electrons from an unknown electron donor, via FMN and iron-sulfur (Fe-S) centers, to quinones in the respiratory and/or the photosynthetic chain. The immediate electron acceptor for the enzyme in this species is believed to be plastoquinone. Couples the redox reaction to proton translocation, and thus conserves the redox energy in a proton gradient. Cyanobacterial NDH-1 also plays a role in inorganic carbon-concentration. In Prochlorococcus marinus subsp. pastoris (strain CCMP1986 / NIES-2087 / MED4), this protein is NAD(P)H-quinone oxidoreductase subunit K.